A 427-amino-acid chain; its full sequence is Tol-Pal system protein TolB (427 aa).

The N-terminal stretch at 1-23 (MKLIARLMSMCAVLFFAINSAYA) is a signal peptide.

The protein belongs to the TolB family. In terms of assembly, the Tol-Pal system is composed of five core proteins: the inner membrane proteins TolA, TolQ and TolR, the periplasmic protein TolB and the outer membrane protein Pal. They form a network linking the inner and outer membranes and the peptidoglycan layer.

Its subcellular location is the periplasm. Functionally, part of the Tol-Pal system, which plays a role in outer membrane invagination during cell division and is important for maintaining outer membrane integrity. This Actinobacillus succinogenes (strain ATCC 55618 / DSM 22257 / CCUG 43843 / 130Z) protein is Tol-Pal system protein TolB.